An 84-amino-acid chain; its full sequence is MVKIRLSRFGSAHNPHYRIVVADVRRPRDGGYIESLGHYDPRKTSENFLKIDVERANHWIAQGAQPTDTARRLLRSQGVKISKK.

Belongs to the bacterial ribosomal protein bS16 family.

The protein is Small ribosomal subunit protein bS16 of Deinococcus radiodurans (strain ATCC 13939 / DSM 20539 / JCM 16871 / CCUG 27074 / LMG 4051 / NBRC 15346 / NCIMB 9279 / VKM B-1422 / R1).